Consider the following 190-residue polypeptide: dITP/XTP pyrophosphatase (190 aa).

Residue 10-15 (TTNKHK) participates in substrate binding. Residues glutamate 39 and aspartate 68 each contribute to the Mg(2+) site. Aspartate 68 (proton acceptor) is an active-site residue. Substrate is bound by residues alanine 69, 143-146 (FGYD), lysine 166, and 171-172 (HR).

Belongs to the HAM1 NTPase family. As to quaternary structure, homodimer. Mg(2+) serves as cofactor.

The enzyme catalyses XTP + H2O = XMP + diphosphate + H(+). The catalysed reaction is dITP + H2O = dIMP + diphosphate + H(+). It carries out the reaction ITP + H2O = IMP + diphosphate + H(+). In terms of biological role, pyrophosphatase that catalyzes the hydrolysis of nucleoside triphosphates to their monophosphate derivatives, with a high preference for the non-canonical purine nucleotides XTP (xanthosine triphosphate), dITP (deoxyinosine triphosphate) and ITP. Seems to function as a house-cleaning enzyme that removes non-canonical purine nucleotides from the nucleotide pool, thus preventing their incorporation into DNA/RNA and avoiding chromosomal lesions. This is dITP/XTP pyrophosphatase from Hyperthermus butylicus (strain DSM 5456 / JCM 9403 / PLM1-5).